The chain runs to 665 residues: Prelamin-A/C (665 aa).

Methionine 1 bears the N-acetylmethionine mark. Residues methionine 1–threonine 27 are disordered. Residues methionine 1 to glutamate 33 are head. The interaction with MLIP stretch occupies residues methionine 1–alanine 130. Phosphothreonine is present on threonine 3. Position 5 is a phosphoserine (serine 5). The residue at position 10 (threonine 10) is a Phosphothreonine. Serine 12 and serine 18 each carry phosphoserine. Threonine 19 is modified (phosphothreonine). Serine 22 carries the post-translational modification Phosphoserine. The IF rod domain maps to glutamate 31–leucine 387. Lysine 32 carries the N6-acetyllysine; alternate modification. The residue at position 32 (lysine 32) is an N6-succinyllysine; alternate. Lysine 32 is covalently cross-linked (Glycyl lysine isopeptide (Lys-Gly) (interchain with G-Cter in SUMO2); alternate). The coil 1A stretch occupies residues aspartate 34–valine 70. A phosphoserine mark is found at serine 51, serine 66, and serine 71. A linker 1 region spans residues serine 71 to alanine 80. Lysine 78 and lysine 97 each carry N6-acetyllysine. Residues tyrosine 81–threonine 218 are coil 1B. Residue lysine 97 forms a Glycyl lysine isopeptide (Lys-Gly) (interchain with G-Cter in SUMO2) linkage. The residue at position 107 (serine 107) is a Phosphoserine. Residues lysine 108, lysine 114, lysine 123, lysine 135, lysine 144, and lysine 155 each carry the N6-acetyllysine modification. Lysine 171 bears the N6-acetyllysine; alternate mark. Lysine 171 bears the N6-succinyllysine; alternate mark. A Glycyl lysine isopeptide (Lys-Gly) (interchain with G-Cter in SUMO2); alternate cross-link involves residue lysine 171. 3 positions are modified to N6-acetyllysine: lysine 180, lysine 201, and lysine 208. Residue lysine 201 forms a Glycyl lysine isopeptide (Lys-Gly) (interchain with G-Cter in SUMO2); alternate linkage. Lysine 201 participates in a covalent cross-link: Glycyl lysine isopeptide (Lys-Gly) (interchain with G-Cter in SUMO); alternate. Lysine 208 participates in a covalent cross-link: Glycyl lysine isopeptide (Lys-Gly) (interchain with G-Cter in SUMO2). The residue at position 212 (serine 212) is a Phosphoserine. Glycyl lysine isopeptide (Lys-Gly) (interchain with G-Cter in SUMO2) cross-links involve residues lysine 219 and lysine 233. A linker 2 region spans residues lysine 219–alanine 242. N6-acetyllysine occurs at positions 233, 260, 265, and 270. Positions aspartate 243–glutamate 383 are coil 2. Lysine 260 participates in a covalent cross-link: Glycyl lysine isopeptide (Lys-Gly) (interchain with G-Cter in SUMO2); alternate. A Glycyl lysine isopeptide (Lys-Gly) (interchain with G-Cter in SUMO2); alternate cross-link involves residue lysine 270. Residues serine 277, serine 282, serine 301, and serine 307 each carry the phosphoserine modification. A Glycyl lysine isopeptide (Lys-Gly) (interchain with G-Cter in SUMO2); alternate cross-link involves residue lysine 311. N6-acetyllysine occurs at positions 311, 316, and 341. Glycyl lysine isopeptide (Lys-Gly) (interchain with G-Cter in SUMO2) cross-links involve residues lysine 366 and lysine 378. Residues glutamate 384–valine 442 are disordered. The interval glutamate 384–methionine 665 is tail. Phosphoserine occurs at positions 390, 392, 395, 398, 403, 404, 406, 407, 409, and 414. Residues serine 395 to serine 409 show a composition bias toward low complexity. At threonine 416 the chain carries Phosphothreonine. Lysine 417 carries the post-translational modification N6-acetyllysine. Glycyl lysine isopeptide (Lys-Gly) (interchain with G-Cter in SUMO2) cross-links involve residues lysine 417 and lysine 420. Residues lysine 417–glutamate 422 carry the Nuclear localization signal motif. Phosphoserine occurs at positions 423, 426, 429, and 431. The 118-residue stretch at serine 428 to arginine 545 folds into the LTD domain. Residue lysine 450 forms a Glycyl lysine isopeptide (Lys-Gly) (interchain with G-Cter in SUMO2); alternate linkage. 2 positions are modified to N6-acetyllysine: lysine 450 and lysine 457. Phosphoserine is present on residues serine 458 and serine 463. Glycyl lysine isopeptide (Lys-Gly) (interchain with G-Cter in SUMO2) cross-links involve residues lysine 470 and lysine 486. N6-acetyllysine is present on lysine 486. The residue at position 496 (threonine 496) is a Phosphothreonine. Serine 500 is modified (phosphoserine). 2 positions are modified to phosphothreonine: threonine 505 and threonine 510. Serine 546 bears the Phosphoserine mark. Position 548 is a phosphothreonine (threonine 548). Positions aspartate 552–aspartate 561 are enriched in acidic residues. The tract at residues aspartate 552–aspartate 577 is disordered. 2 positions are modified to phosphoserine: serine 570 and serine 573. Lysine 599 participates in a covalent cross-link: Glycyl lysine isopeptide (Lys-Gly) (interchain with G-Cter in SUMO2); alternate. Residue lysine 599 forms a Glycyl lysine isopeptide (Lys-Gly) (interchain with G-Cter in SUMO1); alternate linkage. Phosphoserine is present on residues serine 613, serine 614, serine 617, and serine 620. Serine 626 and serine 629 each carry an O-linked (GlcNAc) serine glycan. 4 positions are modified to phosphoserine: serine 629, serine 633, serine 637, and serine 653. Residues leucine 648–cysteine 662 constitute a propeptide, removed in Lamin-A/C form. Cysteine 662 is modified (cysteine methyl ester). A lipid anchor (S-farnesyl cysteine) is attached at cysteine 662. The propeptide at serine 663–methionine 665 is removed in Prelamin-A/C form and in Lamin-A/C form.

It belongs to the intermediate filament family. As to quaternary structure, homodimer of lamin A and lamin C. Lamin dimers then assemble into dimeric head-to-tail polymers. Ultimately, two head-to-tail polymers assemble laterally into a protofilament with a uniformly shaped rod of 3.5 nm in diameter. Interacts with lamin-associated polypeptides IA, IB and TMPO-alpha, RB1 and with emerin. Interacts with SREBF1, SREBF2, SUN2 and TMEM43. Interacts with TMEM201. Proteolytically processed isoform A interacts with NARF. Interacts with SUN1. Interacts with MLIP. Interacts with DMPK; may regulate nuclear envelope stability. Interacts with SUV39H1; the interaction increases stability of SUV39H1. Interacts with SYNE2. Interacts with ITSN1 isoform 2. Interacts with IFFO1; enables the formation of an interior nucleoskeleton that is recruited to DNA double-strand breaks. Interacts with EMD. In terms of assembly, interacts (via C-terminus) with LEMD2 (via N-terminus) (in vitro). In terms of processing, proteolytic cleavage of the C-terminal of 18 residues of prelamin-A/C results in the production of lamin-A/C. The prelamin-A/C maturation pathway includes farnesylation of CAAX motif by protein farnesyltransferase (FNTA and FNTB), removal of the last three amino acids (-AAX) by RCE1/FACE2 and/or ZMPSTE24, methylation of the C-terminal cysteine by ICMT and endoproteolytic removal of the last 15 C-terminal amino acids by ZMPSTE24. Proteolytic cleavage requires prior farnesylation and methylation, and absence of these blocks cleavage. Farnesylation of prelamin-A/C facilitates nuclear envelope targeting. Post-translationally, phosphorylation plays a key role in lamin organization, subcellular localization and nuclear envelope disintegration. Phosphorylation by CDK1 at Ser-22 and Ser-392 at the onset of mitosis drives lamin disassembly and nuclear envelope breakdown. Phosphorylation at Ser-22 and Ser-392 during interphase promotes localization to the nucleoplasm and regulates lamina assembly. Phosphorylation at Ser-22, Ser-392 and Ser-629 during interphase causes redistribution between the nucleus and the cytoplasm. Phosphorylation at Ser-22 by CDK1 regulates matrix stiffness. Phosphorylation status of Ser-22 determines its localization between double-strand break (DSB) sites and the nuclear matrix. Phosphorylated by ATR at Ser-282 in response to DNA damage, leading to lamin disassembly and nuclear envelope rupture. Phosphorylation also regulates stability in micronuclei arising from genome instability: phosphorylation at Ser-395 by ATR in response to genome instability and double-stranded DNA breaks primes LMNA for subsequent phosphorylation at Ser-392 by CDK1 and micronuclei envelope rupture. The rupture of micronuclear envelope triggers the cGAS-STING pathway thereby activating the type I interferon response and innate immunity. In terms of processing, acetylation by KAT8 is required for nuclear architecture. Sumoylation is necessary for the localization to the nuclear envelope.

The protein localises to the nucleus lamina. It is found in the nucleus envelope. It localises to the nucleus. Its subcellular location is the nucleoplasm. The protein resides in the nucleus matrix. Lamins are intermediate filament proteins that assemble into a filamentous meshwork, and which constitute the major components of the nuclear lamina, a fibrous layer on the nucleoplasmic side of the inner nuclear membrane. Lamins provide a framework for the nuclear envelope, bridging the nuclear envelope and chromatin, thereby playing an important role in nuclear assembly, chromatin organization, nuclear membrane and telomere dynamics. Lamin A and C also regulate matrix stiffness by conferring nuclear mechanical properties. The structural integrity of the lamina is strictly controlled by the cell cycle, as seen by the disintegration and formation of the nuclear envelope in prophase and telophase, respectively. Lamin A and C are present in equal amounts in the lamina of mammals. Also invoved in DNA repair: recruited by DNA repair proteins XRCC4 and IFFO1 to the DNA double-strand breaks (DSBs) to prevent chromosome translocation by immobilizing broken DNA ends. Required for normal development of peripheral nervous system and skeletal muscle and for muscle satellite cell proliferation. Required for osteoblastogenesis and bone formation. Also prevents fat infiltration of muscle and bone marrow, helping to maintain the volume and strength of skeletal muscle and bone. Required for cardiac homeostasis. In terms of biological role, prelamin-A/C can accelerate smooth muscle cell senescence. It acts to disrupt mitosis and induce DNA damage in vascular smooth muscle cells (VSMCs), leading to mitotic failure, genomic instability, and premature senescence. This chain is Prelamin-A/C (Lmna), found in Rattus norvegicus (Rat).